A 282-amino-acid polypeptide reads, in one-letter code: Pantothenate synthetase (282 aa).

An ATP-binding site is contributed by 30 to 37 (MGYLHEGH). His-37 serves as the catalytic Proton donor. Residue Gln-61 participates in (R)-pantoate binding. Gln-61 contacts beta-alanine. Position 147 to 150 (147 to 150 (GMKD)) interacts with ATP. Gln-153 provides a ligand contact to (R)-pantoate. ATP-binding positions include Val-176 and 184–187 (KSSR).

This sequence belongs to the pantothenate synthetase family. Homodimer.

The protein resides in the cytoplasm. It catalyses the reaction (R)-pantoate + beta-alanine + ATP = (R)-pantothenate + AMP + diphosphate + H(+). Its pathway is cofactor biosynthesis; (R)-pantothenate biosynthesis; (R)-pantothenate from (R)-pantoate and beta-alanine: step 1/1. Its function is as follows. Catalyzes the condensation of pantoate with beta-alanine in an ATP-dependent reaction via a pantoyl-adenylate intermediate. This chain is Pantothenate synthetase, found in Bacillus anthracis (strain A0248).